A 192-amino-acid polypeptide reads, in one-letter code: Leucine-rich repeat-containing protein 51 (192 aa).

LRR repeat units lie at residues 49–71, 80–101, and 103–124; these read SLTQ…NQVV, NLAW…LTTF, and NLSV…NKLA. The region spanning 137-175 is the LRRCT domain; sequence NPIEEEKGYRQYVLCNLPRITTFDFSGVTKADRSTAEVW.

It is found in the cytoplasm. This is Leucine-rich repeat-containing protein 51 from Rattus norvegicus (Rat).